The primary structure comprises 372 residues: MLLWLFEQLAGYHSSFQVVRYLTLRSLLSVLTSLTIGLVLGPIMIRKLQALKYGQAVSSFAPENHAKKMGTPTMGGILILLSIGISTLLWADLSNPYVWIVLGVMVVFGAVGWADDWIKIRYKDNAGLPARKKFFWTSVASLGAGIALYLIATQQSNAEYTANMLDLLIPFFKNLSIPLSIVPLGLAFIVFTYLVINGASNAVNLTDGLDGLAIMPVVMVATGLGVFAYLSGDIRFANYLHIPYVKYTSELVVICSAMIGAGLAFLWYNAHPAQVFMGDVGALALGAMLGTIAVMVRQEIVFAIMGGVFVMEAVSVFLQIGSLRMRNKRVFLMAPLHHHYEKQGWKETQVVIRFWIITIMLVVLGLMTLKLR.

A run of 10 helical transmembrane segments spans residues 25–45, 73–93, 98–118, 134–154, 176–196, 211–231, 251–271, 275–295, 300–320, and 349–369; these read RSLL…PIMI, TMGG…WADL, VWIV…DDWI, FFWT…IATQ, SIPL…YLVI, GLAI…AYLS, LVVI…YNAH, VFMG…IAVM, IVFA…FLQI, and QVVI…LMTL.

It belongs to the glycosyltransferase 4 family. MraY subfamily. It depends on Mg(2+) as a cofactor.

It localises to the cell inner membrane. The enzyme catalyses UDP-N-acetyl-alpha-D-muramoyl-L-alanyl-gamma-D-glutamyl-meso-2,6-diaminopimeloyl-D-alanyl-D-alanine + di-trans,octa-cis-undecaprenyl phosphate = di-trans,octa-cis-undecaprenyl diphospho-N-acetyl-alpha-D-muramoyl-L-alanyl-D-glutamyl-meso-2,6-diaminopimeloyl-D-alanyl-D-alanine + UMP. It functions in the pathway cell wall biogenesis; peptidoglycan biosynthesis. Functionally, catalyzes the initial step of the lipid cycle reactions in the biosynthesis of the cell wall peptidoglycan: transfers peptidoglycan precursor phospho-MurNAc-pentapeptide from UDP-MurNAc-pentapeptide onto the lipid carrier undecaprenyl phosphate, yielding undecaprenyl-pyrophosphoryl-MurNAc-pentapeptide, known as lipid I. This Acinetobacter baumannii (strain AB0057) protein is Phospho-N-acetylmuramoyl-pentapeptide-transferase.